A 295-amino-acid chain; its full sequence is Ribosomal RNA small subunit methyltransferase A (295 aa).

S-adenosyl-L-methionine-binding residues include asparagine 25, leucine 27, glycine 52, glutamate 73, aspartate 98, and asparagine 120.

The protein belongs to the class I-like SAM-binding methyltransferase superfamily. rRNA adenine N(6)-methyltransferase family. RsmA subfamily.

It localises to the cytoplasm. The enzyme catalyses adenosine(1518)/adenosine(1519) in 16S rRNA + 4 S-adenosyl-L-methionine = N(6)-dimethyladenosine(1518)/N(6)-dimethyladenosine(1519) in 16S rRNA + 4 S-adenosyl-L-homocysteine + 4 H(+). In terms of biological role, specifically dimethylates two adjacent adenosines (A1518 and A1519) in the loop of a conserved hairpin near the 3'-end of 16S rRNA in the 30S particle. May play a critical role in biogenesis of 30S subunits. The protein is Ribosomal RNA small subunit methyltransferase A of Desulfotalea psychrophila (strain LSv54 / DSM 12343).